Reading from the N-terminus, the 194-residue chain is Adenylate kinase isoenzyme 1 (194 aa).

Met-1 carries the post-translational modification N-acetylmethionine. 18–23 contacts ATP; sequence GSGKGT. A Phosphoserine modification is found at Ser-38. The NMP stretch occupies residues 38–67; sequence STGDLLRAEVSSGSARGKMLSEIMEKGQLV. AMP is bound by residues Thr-39, Arg-44, 65–67, 94–97, and Gln-101; these read QLV and GYPR. Positions 131 to 141 are LID; it reads KRGETSGRVDD. ATP is bound at residue Arg-132. The AMP site is built by Arg-138 and Arg-149. Gly-177 is an ATP binding site.

This sequence belongs to the adenylate kinase family. AK1 subfamily. Monomer. Requires Mg(2+) as cofactor.

Its subcellular location is the cytoplasm. It carries out the reaction a ribonucleoside 5'-phosphate + ATP = a ribonucleoside 5'-diphosphate + ADP. The catalysed reaction is AMP + ATP = 2 ADP. It catalyses the reaction dAMP + ATP = dADP + ADP. The enzyme catalyses dATP + AMP = dADP + ADP. It carries out the reaction dAMP + dATP = 2 dADP. The catalysed reaction is a 2'-deoxyribonucleoside 5'-diphosphate + ATP = a 2'-deoxyribonucleoside 5'-triphosphate + ADP. It catalyses the reaction a ribonucleoside 5'-diphosphate + ATP = a ribonucleoside 5'-triphosphate + ADP. The enzyme catalyses CDP + GTP = CTP + GDP. It carries out the reaction GDP + ATP = GTP + ADP. The catalysed reaction is UDP + ATP = UTP + ADP. It catalyses the reaction GTP + UDP = UTP + GDP. The enzyme catalyses dTDP + GTP = dTTP + GDP. It carries out the reaction dCDP + GTP = dCTP + GDP. The catalysed reaction is dGDP + ATP = dGTP + ADP. It catalyses the reaction dADP + GTP = dATP + GDP. The enzyme catalyses thiamine diphosphate + ADP = thiamine triphosphate + AMP. Its function is as follows. Catalyzes the reversible transfer of the terminal phosphate group between ATP and AMP. Also displays broad nucleoside diphosphate kinase activity. Plays an important role in cellular energy homeostasis and in adenine nucleotide metabolism. Also catalyzes at a very low rate the synthesis of thiamine triphosphate (ThTP) from thiamine diphosphate (ThDP) and ADP. This chain is Adenylate kinase isoenzyme 1, found in Sus scrofa (Pig).